Here is a 500-residue protein sequence, read N- to C-terminus: Centrosomal protein of 57 kDa (500 aa).

Residues Met1–Ser16 are compositionally biased toward low complexity. A disordered region spans residues Met1–Phe59. Over residues Ser22 to Pro35 the composition is skewed to polar residues. Ser53 bears the Phosphoserine mark. A centrosome localization domain (CLD) region spans residues Thr58–Glu239. Residues Glu63 to Arg242 are a coiled coil. Disordered regions lie at residues Ser256–Thr275 and Gln432–Leu478. A mediates interaction with microtubules region spans residues Gly278–Leu491. Residues Thr389–Ser449 adopt a coiled-coil conformation. Composition is skewed to basic and acidic residues over residues Gln432–Asp444 and Ser461–Arg475.

It belongs to the translokin family. As to quaternary structure, interacts with FGF2 and RAP80. Does not interact with FGF1 or FGF2 isoform 24 kDa. Homodimer and homooligomer. Interacts with microtubules. Ubiquitous (at protein level). Expressed in testis, predominantly in round spermatids. Low expression is detected in other tissues.

It localises to the nucleus. It is found in the cytoplasm. The protein resides in the cytoskeleton. Its subcellular location is the microtubule organizing center. The protein localises to the centrosome. Its function is as follows. Centrosomal protein which may be required for microtubule attachment to centrosomes. May act by forming ring-like structures around microtubules. Mediates nuclear translocation and mitogenic activity of the internalized growth factor FGF2. This chain is Centrosomal protein of 57 kDa (Cep57), found in Mus musculus (Mouse).